The chain runs to 678 residues: DNA ligase (678 aa).

NAD(+)-binding positions include 34–38 (DSEYD), 83–84 (SL), and E114. K116 acts as the N6-AMP-lysine intermediate in catalysis. R137, E176, K293, and K317 together coordinate NAD(+). Zn(2+)-binding residues include C411, C414, C429, and C435. Residues 594-678 (PTRQPLNGES…LMAGYGQTLS (85 aa)) form the BRCT domain.

It belongs to the NAD-dependent DNA ligase family. LigA subfamily. Mg(2+) serves as cofactor. Mn(2+) is required as a cofactor.

The enzyme catalyses NAD(+) + (deoxyribonucleotide)n-3'-hydroxyl + 5'-phospho-(deoxyribonucleotide)m = (deoxyribonucleotide)n+m + AMP + beta-nicotinamide D-nucleotide.. Functionally, DNA ligase that catalyzes the formation of phosphodiester linkages between 5'-phosphoryl and 3'-hydroxyl groups in double-stranded DNA using NAD as a coenzyme and as the energy source for the reaction. It is essential for DNA replication and repair of damaged DNA. The chain is DNA ligase from Acinetobacter baumannii (strain SDF).